The chain runs to 1368 residues: DNA-directed RNA polymerase subunit beta (1368 aa).

Belongs to the RNA polymerase beta chain family. In terms of assembly, the RNAP catalytic core consists of 2 alpha, 1 beta, 1 beta' and 1 omega subunit. When a sigma factor is associated with the core the holoenzyme is formed, which can initiate transcription.

It catalyses the reaction RNA(n) + a ribonucleoside 5'-triphosphate = RNA(n+1) + diphosphate. Functionally, DNA-dependent RNA polymerase catalyzes the transcription of DNA into RNA using the four ribonucleoside triphosphates as substrates. This chain is DNA-directed RNA polymerase subunit beta, found in Desulfosudis oleivorans (strain DSM 6200 / JCM 39069 / Hxd3) (Desulfococcus oleovorans).